The sequence spans 126 residues: LQAVAVFKQLPEAAALAAANKRVQNLLKKADAALGEVNESLLQQDEEKALYAAAQGLQPKIAAAVAEGNFRTALSELASVKPQVDAFFDGVMVMAEDAAVKQNRLNLLNRLAEQMNAVADIALLGE.

It belongs to the class-II aminoacyl-tRNA synthetase family. In terms of assembly, tetramer of two alpha and two beta subunits.

It is found in the cytoplasm. The catalysed reaction is tRNA(Gly) + glycine + ATP = glycyl-tRNA(Gly) + AMP + diphosphate. In Neisseria gonorrhoeae, this protein is Glycine--tRNA ligase beta subunit (glyS).